Reading from the N-terminus, the 351-residue chain is Glucan endo-1,3-beta-glucosidase (351 aa).

The first 32 residues, methionine 1 to alanine 32, serve as a signal peptide directing secretion. Glutamine 33 carries the post-translational modification Pyrrolidone carboxylic acid. N-linked (GlcNAc...) asparagine glycosylation is found at asparagine 79 and asparagine 99. Glutamate 128 acts as the Proton donor in catalysis. The N-linked (GlcNAc...) asparagine glycan is linked to asparagine 235. The active-site Nucleophile is glutamate 268.

Belongs to the glycosyl hydrolase 17 family. Glycosylated. In terms of processing, the N-terminus is blocked.

It localises to the secreted. It is found in the extracellular space. The protein resides in the extracellular matrix. The enzyme catalyses Hydrolysis of (1-&gt;3)-beta-D-glucosidic linkages in (1-&gt;3)-beta-D-glucans.. Its function is as follows. Implicated in the defense of plants against pathogens. The protein is Glucan endo-1,3-beta-glucosidase (SP41B) of Nicotiana tabacum (Common tobacco).